Here is a 105-residue protein sequence, read N- to C-terminus: Platelet factor 4 (105 aa).

A signal peptide spans 1 to 29 (MSVAAVFRGLRPSPELLLLGLLFLPAVVA). The O-linked (GalNAc...) threonine glycan is linked to Thr-31. Intrachain disulfides connect Cys-44–Cys-71 and Cys-46–Cys-87. Ser-61 is subject to Phosphoserine. Residue 96 to 102 (KKVIKKI) coordinates heparin.

Belongs to the intercrine alpha (chemokine CxC) family. As to quaternary structure, homotetramer. Interacts with TNFAIP6 (via Link domain). Interacts with CCR1. Interacts with CXCR3. Interacts with THBD; this interaction enhances generation of activated protein C.

Its subcellular location is the secreted. Functionally, chemokine released during platelet aggregation that plays a role in different biological processes including hematopoiesis, cell proliferation, differentiation, and activation. Acts via different functional receptors including CCR1, CXCR3A or CXCR3B. Upon interaction with CXCR3A receptor, induces activated T-lymphocytes migration mediated via downstream Ras/extracellular signal-regulated kinase (ERK) signaling. Neutralizes the anticoagulant effect of heparin by binding more strongly to heparin than to the chondroitin-4-sulfate chains of the carrier molecule. Plays a role in the inhibition of hematopoiesis and in the maintenance of hematopoietic stem cell (HSC) quiescence. Chemotactic for neutrophils and monocytes via CCR1. Inhibits endothelial cell proliferation. In cooperation with toll-like receptor 8/TLR8, induces chromatin remodeling and activates inflammatory gene expression via the TBK1-IRF5 axis. In addition, induces myofibroblast differentiation and collagen synthesis in different precursor cells, including endothelial cells, by stimulating endothelial-to-mesenchymal transition. Interacts with thrombomodulin/THBD to enhance the activation of protein C and thus potentiates its anticoagulant activity. This chain is Platelet factor 4 (Pf4), found in Mus musculus (Mouse).